Consider the following 526-residue polypeptide: Peptide chain release factor 3 (526 aa).

Positions 9 to 277 constitute a tr-type G domain; the sequence is ERRRTFAIIS…AFAEYAPPPQ (269 aa). Residues 18–25, 86–90, and 140–143 each bind GTP; these read SHPDAGKT, DTPGH, and NKLD.

Belongs to the TRAFAC class translation factor GTPase superfamily. Classic translation factor GTPase family. PrfC subfamily.

The protein resides in the cytoplasm. In terms of biological role, increases the formation of ribosomal termination complexes and stimulates activities of RF-1 and RF-2. It binds guanine nucleotides and has strong preference for UGA stop codons. It may interact directly with the ribosome. The stimulation of RF-1 and RF-2 is significantly reduced by GTP and GDP, but not by GMP. The sequence is that of Peptide chain release factor 3 from Methylococcus capsulatus (strain ATCC 33009 / NCIMB 11132 / Bath).